A 143-amino-acid chain; its full sequence is Ribonuclease P protein component (143 aa).

A disordered region spans residues 111-143 (RVKRKGGGPGGNRRSAPPGSAPLTDDGRLRGEP).

The protein belongs to the RnpA family. In terms of assembly, consists of a catalytic RNA component (M1 or rnpB) and a protein subunit.

The enzyme catalyses Endonucleolytic cleavage of RNA, removing 5'-extranucleotides from tRNA precursor.. In terms of biological role, RNaseP catalyzes the removal of the 5'-leader sequence from pre-tRNA to produce the mature 5'-terminus. It can also cleave other RNA substrates such as 4.5S RNA. The protein component plays an auxiliary but essential role in vivo by binding to the 5'-leader sequence and broadening the substrate specificity of the ribozyme. The chain is Ribonuclease P protein component from Deinococcus geothermalis (strain DSM 11300 / CIP 105573 / AG-3a).